We begin with the raw amino-acid sequence, 372 residues long: Putative neuropeptide precursor protein (372 aa).

An N-terminal signal peptide occupies residues 1-17 (MLLFSLTAITAVLAVSA). Disordered regions lie at residues 18 to 89 (VPTP…SNGE) and 136 to 208 (VTKS…KRDS). A compositionally biased stretch (polar residues) spans 19–31 (PTPSNNKDGSTIS). The span at 38-57 (DQTKDDNRSLFLNKSDKNDL) shows a compositional bias: basic and acidic residues. The segment covering 72-89 (GYDQTVDQRFDSPQSNGE) has biased composition (polar residues). Positions 177-191 (GGAAASAKTATKNSG) are enriched in low complexity.

In terms of processing, may be proteolytically processed to give rise to a number of active peptides. As to expression, detected in the brain and frontal ganglion and in the axons connecting to the corpus cardiacum and corpus allatum (at protein level). Detected in the brain-subesophageal ganglion (brain-SG) complex, fat body, midgut and ovary. Expression in the brain-SG complex is 2-3 times higher than in the other tissues.

The protein resides in the cytoplasm. The protein localises to the secreted. This is Putative neuropeptide precursor protein from Bombyx mori (Silk moth).